Reading from the N-terminus, the 257-residue chain is Enterotoxin type A (257 aa).

Residues 1–24 form the signal peptide; sequence MKKTAFTLLLFIALTLTTSPLVNG. Cysteines 120 and 130 form a disulfide. Zn(2+) is bound by residues His-211, His-249, and Asp-251.

This sequence belongs to the staphylococcal/streptococcal toxin family. In terms of assembly, monomer. Interacts with MHC class II molecules alpha/HLA-DRB1 and beta/HLA-DRA chains. The interaction with MHC-II molecules occurs at both zinc-dependent and zinc-independent sites. Interacts with T-cell receptor beta variable 7-9/TRBV7-9. Requires Zn(2+) as cofactor.

It is found in the secreted. Functionally, staphylococcal enterotoxin that activates the host immune system by binding as unprocessed molecules to major histocompatibility (MHC) complex class II and T-cell receptor (TCR) molecules. In turn, waves of cellular activation, cytokine production, and migration into the lung tissue and airways occur via alphabeta T-cells. Also causes the intoxication staphylococcal food poisoning syndrome. The illness is characterized by high fever, hypotension, diarrhea, shock, and in some cases death. The sequence is that of Enterotoxin type A (entA) from Staphylococcus aureus.